The primary structure comprises 267 residues: Indole-3-glycerol phosphate synthase 1 (267 aa).

The protein belongs to the TrpC family.

The enzyme catalyses 1-(2-carboxyphenylamino)-1-deoxy-D-ribulose 5-phosphate + H(+) = (1S,2R)-1-C-(indol-3-yl)glycerol 3-phosphate + CO2 + H2O. The protein operates within amino-acid biosynthesis; L-tryptophan biosynthesis; L-tryptophan from chorismate: step 4/5. The chain is Indole-3-glycerol phosphate synthase 1 (trpC1) from Ralstonia nicotianae (strain ATCC BAA-1114 / GMI1000) (Ralstonia solanacearum).